The following is a 130-amino-acid chain: Protein ApaG (130 aa).

One can recognise an ApaG domain in the interval 3–127; that stretch reads RALTRDIEVV…FSLDSPGLLR (125 aa). The segment at 63-83 is disordered; sequence EVTGPGVVGEQPRLSPGDTYE.

The polypeptide is Protein ApaG (Rhizobium etli (strain ATCC 51251 / DSM 11541 / JCM 21823 / NBRC 15573 / CFN 42)).